Here is a 409-residue protein sequence, read N- to C-terminus: Bone morphogenetic protein 4 (409 aa).

An N-terminal signal peptide occupies residues Met1–Gly19. The propeptide occupies Gly20–Arg293. Ser91 carries the phosphoserine modification. N-linked (GlcNAc...) asparagine glycans are attached at residues Asn144 and Asn209. Positions Ala284–Asn308 are disordered. Intrachain disulfides connect Cys309–Cys374, Cys338–Cys406, and Cys342–Cys408. N-linked (GlcNAc...) asparagine glycosylation is found at Asn351 and Asn366.

Belongs to the TGF-beta family. Homodimer; disulfide-linked. Interacts with GREM2. Part of a complex consisting of TWSG1 and CHRD. Interacts with the serine proteases, HTRA1 and HTRA3; the interaction with either inhibits BMP4-mediated signaling. The HTRA protease activity is required for this inhibition. Interacts with SOSTDC1. Interacts with FBN1 (via N-terminal domain) and FBN2. Interacts with type I receptor BMPR1A. Interacts with type II receptor BMPR2. Interacts with FSTL1; this interaction inhibits the activation of the BMP4/Smad1/5/8 signaling pathway. Interacts with TGFBR3.

Its subcellular location is the secreted. The protein resides in the extracellular space. The protein localises to the extracellular matrix. Its function is as follows. Growth factor of the TGF-beta superfamily that plays essential roles in many developmental processes, including neurogenesis, vascular development, angiogenesis and osteogenesis. Acts in concert with PTHLH/PTHRP to stimulate ductal outgrowth during embryonic mammary development and to inhibit hair follicle induction. Initiates the canonical BMP signaling cascade by associating with type I receptor BMPR1A and type II receptor BMPR2. Once all three components are bound together in a complex at the cell surface, BMPR2 phosphorylates and activates BMPR1A. In turn, BMPR1A propagates signal by phosphorylating SMAD1/5/8 that travel to the nucleus and act as activators and repressors of transcription of target genes. Positively regulates the expression of odontogenic development regulator MSX1 via inducing the IPO7-mediated import of SMAD1 to the nucleus. Required for MSX1-mediated mesenchymal molar tooth bud development beyond the bud stage, via promoting Wnt signaling. Acts as a positive regulator of odontoblast differentiation during mesenchymal tooth germ formation, expression is repressed during the bell stage by MSX1-mediated inhibition of CTNNB1 signaling. Able to induce its own expression in dental mesenchymal cells and also in the neighboring dental epithelial cells via an MSX1-mediated pathway. Can also signal through non-canonical BMP pathways such as ERK/MAP kinase, PI3K/Akt, or SRC cascades. For example, induces SRC phosphorylation which, in turn, activates VEGFR2, leading to an angiogenic response. The protein is Bone morphogenetic protein 4 of Suncus murinus (Asian house shrew).